A 547-amino-acid chain; its full sequence is DEAD-box ATP-dependent RNA helicase 31 (547 aa).

Acidic residues predominate over residues 1-34 (MFDFGLSEDDSELGEVDEDDGPSGFEDDLFDDEG). The disordered stretch occupies residues 1 to 74 (MFDFGLSEDD…HTRESGGGDS (74 aa)). Basic and acidic residues predominate over residues 53 to 70 (IKGEPIDQEGVVHTRESG). The short motif at 79 to 107 (TRFDECSLSPLTLKGVKAAGYERMTAVQE) is the Q motif element. A Helicase ATP-binding domain is found at 110-293 (LPIILKGKDV…HIAMKRDLEF (184 aa)). ATP is bound at residue 123 to 130 (AKTGTGKT). Positions 241 to 244 (DEAD) match the DEAD box motif. The 152-residue stretch at 327–478 (LLTDHISENV…TKRKVEKALA (152 aa)) folds into the Helicase C-terminal domain.

It belongs to the DEAD box helicase family.

It carries out the reaction ATP + H2O = ADP + phosphate + H(+). This Oryza sativa subsp. japonica (Rice) protein is DEAD-box ATP-dependent RNA helicase 31.